The primary structure comprises 467 residues: Acid phosphatase PHO12 (467 aa).

Residues 1-17 (MLKSAVYSILAASLVNA) form the signal peptide. Residue histidine 75 is the Nucleophile of the active site. N-linked (GlcNAc...) asparagine glycans are attached at residues asparagine 97, asparagine 162, asparagine 192, asparagine 250, and asparagine 315. Aspartate 338 acts as the Proton donor in catalysis. Asparagine 356, asparagine 390, asparagine 439, asparagine 445, and asparagine 461 each carry an N-linked (GlcNAc...) asparagine glycan.

This sequence belongs to the histidine acid phosphatase family. Post-translationally, glycosylated during secretion across the membrane.

The enzyme catalyses a phosphate monoester + H2O = an alcohol + phosphate. In Saccharomyces cerevisiae (strain ATCC 204508 / S288c) (Baker's yeast), this protein is Acid phosphatase PHO12 (PHO12).